The following is a 504-amino-acid chain: Lysine--tRNA ligase (504 aa).

Mg(2+) is bound by residues Glu-411 and Glu-418.

Belongs to the class-II aminoacyl-tRNA synthetase family. As to quaternary structure, homodimer. It depends on Mg(2+) as a cofactor.

It localises to the cytoplasm. It catalyses the reaction tRNA(Lys) + L-lysine + ATP = L-lysyl-tRNA(Lys) + AMP + diphosphate. The chain is Lysine--tRNA ligase from Clostridium botulinum (strain Loch Maree / Type A3).